Reading from the N-terminus, the 62-residue chain is Large ribosomal subunit protein bL28 (62 aa).

Positions 1 to 22 (MAKKCAISGKGPMSGNNVSHAK) are disordered.

It belongs to the bacterial ribosomal protein bL28 family.

The protein is Large ribosomal subunit protein bL28 of Sulfurimonas denitrificans (strain ATCC 33889 / DSM 1251) (Thiomicrospira denitrificans (strain ATCC 33889 / DSM 1251)).